Consider the following 1544-residue polypeptide: Arf-GAP with Rho-GAP domain, ANK repeat and PH domain-containing protein 3 (1544 aa).

The SAM domain occupies 4–68 (PQDLDIAVWL…LRLLQTGTEE (65 aa)). Disordered stretches follow at residues 64–147 (TGTE…EQSS) and 167–194 (GRAQ…PTTG). Pro residues-rich tracts occupy residues 82–97 (SPSP…PVPK) and 130–139 (EPSPRPPPLP). 2 PH domains span residues 287-379 (TPLL…SCLK) and 394-483 (RPLR…EAVT). The Arf-GAP domain occupies 480 to 611 (EAVTETLSDY…LFRKPHPQYP (132 aa)). Residues 504–527 (CADCGSSRPDWAAVNLGVVICKQC) form a C4-type zinc finger. Residues 907–1088 (TGLQEQQMSR…ELIDGYISVF (182 aa)) form the Rho-GAP domain. The Ras-associating domain occupies 1117 to 1210 (GDLIMEVYIE…ASLLLKKVPL (94 aa)). Residues 1223-1325 (ESPRVGLLRC…WTTSILKAQH (103 aa)) enclose the PH 3 domain. Thr1348 carries the post-translational modification Phosphothreonine. Tyr1403 and Tyr1408 each carry phosphotyrosine. The interval 1422-1544 (STSFSTTREW…SSPPSSQPLT (123 aa)) is disordered. Over residues 1438–1457 (PLTSQKSLDQPFLSKSSTLG) the composition is skewed to polar residues. Ser1444 and Ser1480 each carry phosphoserine. 2 stretches are compositionally biased toward low complexity: residues 1482-1492 (EEQLLQELSSL) and 1502-1527 (GLGS…TPGF).

In terms of assembly, interacts (via SAM domain) with INPPL1/SHIP2. Post-translationally, tyrosine phosphorylated at a low basal level. PDGF treatment stimulates phosphorylation. Tyrosine phosphorylation is increased in cells that are in the process of becoming attached to a substrate and that start spreading and flattening.

Its subcellular location is the cytoplasm. It localises to the cytoskeleton. The protein localises to the cell membrane. The protein resides in the cell projection. It is found in the lamellipodium. Its subcellular location is the ruffle. Functionally, phosphatidylinositol 3,4,5-trisphosphate-dependent GTPase-activating protein that modulates actin cytoskeleton remodeling by regulating ARF and RHO family members. Is activated by phosphatidylinositol 3,4,5-trisphosphate (PtdIns(3,4,5)P3) binding. Can be activated by phosphatidylinositol 3,4-bisphosphate (PtdIns(3,4,5)P2) binding, albeit with lower efficiency. Acts on ARF6, RAC1, RHOA and CDC42. Plays a role in the internalization of anthrax toxin. In Homo sapiens (Human), this protein is Arf-GAP with Rho-GAP domain, ANK repeat and PH domain-containing protein 3 (ARAP3).